We begin with the raw amino-acid sequence, 351 residues long: UPF0764 protein C16orf89 homolog (351 aa).

The first 25 residues, 1–25 (MKSLKMLYPLFMLLVLSSKIDLSNQ), serve as a signal peptide directing secretion.

It belongs to the UPF0764 family. Homodimer.

Its subcellular location is the secreted. The polypeptide is UPF0764 protein C16orf89 homolog (Danio rerio (Zebrafish)).